Consider the following 775-residue polypeptide: Glutamine--tRNA ligase (775 aa).

Residue Ala2 is modified to N-acetylalanine. Ser70 is subject to Phosphoserine. Residues 271 to 273 (EPN) and 277 to 283 (HIGHAKA) each bind ATP. Asp303 contacts L-glutamine. Lys309 bears the N6-acetyllysine mark. Tyr438 serves as a coordination point for L-glutamine. ATP-binding positions include Thr457, 486-487 (RL), and 494-496 (VSK). Residue Ser495 is modified to Phosphoserine.

Belongs to the class-I aminoacyl-tRNA synthetase family. Monomer. Part of a multisubunit complex that groups tRNA ligases for Arg (RARS1), Asp (DARS1), Gln (QARS1), Ile (IARS1), Leu (LARS1), Lys (KARS1), Met (MARS1) the bifunctional ligase for Glu and Pro (EPRS1) and the auxiliary subunits AIMP1/p43, AIMP2/p38 and EEF1E1/p18. Interacts with RARS1. Part of a complex composed of RARS1, QARS1 and AIMP1.

It localises to the cytoplasm. The protein resides in the cytosol. It catalyses the reaction tRNA(Gln) + L-glutamine + ATP = L-glutaminyl-tRNA(Gln) + AMP + diphosphate. Functionally, glutamine--tRNA ligase. Plays a critical role in brain development. The protein is Glutamine--tRNA ligase (Qars1) of Mus musculus (Mouse).